We begin with the raw amino-acid sequence, 492 residues long: Bifunctional purine biosynthesis protein PurH (492 aa).

The region spanning 1 to 144 (MKKAILSVSN…KNFKHVTTIV (144 aa)) is the MGS-like domain.

The protein belongs to the PurH family.

The enzyme catalyses (6R)-10-formyltetrahydrofolate + 5-amino-1-(5-phospho-beta-D-ribosyl)imidazole-4-carboxamide = 5-formamido-1-(5-phospho-D-ribosyl)imidazole-4-carboxamide + (6S)-5,6,7,8-tetrahydrofolate. The catalysed reaction is IMP + H2O = 5-formamido-1-(5-phospho-D-ribosyl)imidazole-4-carboxamide. The protein operates within purine metabolism; IMP biosynthesis via de novo pathway; 5-formamido-1-(5-phospho-D-ribosyl)imidazole-4-carboxamide from 5-amino-1-(5-phospho-D-ribosyl)imidazole-4-carboxamide (10-formyl THF route): step 1/1. It participates in purine metabolism; IMP biosynthesis via de novo pathway; IMP from 5-formamido-1-(5-phospho-D-ribosyl)imidazole-4-carboxamide: step 1/1. This Staphylococcus epidermidis (strain ATCC 35984 / DSM 28319 / BCRC 17069 / CCUG 31568 / BM 3577 / RP62A) protein is Bifunctional purine biosynthesis protein PurH.